The chain runs to 734 residues: Amino-acid acetyltransferase, mitochondrial (734 aa).

Residues 384 to 433 are disordered; that stretch reads YSETSSRSTRAEADSNFNLRDDIPLSSFTEQKSGELEYSPRHQNDSPTQQ. 2 stretches are compositionally biased toward basic and acidic residues: residues 392-406 and 415-427; these read TRAEADSNFNLRDDI and KSGELEYSPRHQN. An N-acetyltransferase domain is found at 555 to 724; the sequence is GVPQISLTDP…YEAVCKTIEP (170 aa).

This sequence belongs to the acetyltransferase family.

It localises to the mitochondrion. It carries out the reaction L-glutamate + acetyl-CoA = N-acetyl-L-glutamate + CoA + H(+). Its pathway is amino-acid biosynthesis; L-arginine biosynthesis; N(2)-acetyl-L-ornithine from L-glutamate: step 1/4. In terms of biological role, N-acetylglutamate synthase involved in arginine biosynthesis. This chain is Amino-acid acetyltransferase, mitochondrial (arg2), found in Botryotinia fuckeliana (strain B05.10) (Noble rot fungus).